Here is a 141-residue protein sequence, read N- to C-terminus: Fluoride-specific ion channel FluC 1 (141 aa).

A run of 4 helical transmembrane segments spans residues 12–32, 44–64, 79–99, and 107–127; these read LYAL…LVGV, WATL…AAIA, FVMT…LETF, and ALAA…AVWL. Na(+)-binding residues include Gly-86 and Thr-89.

This sequence belongs to the fluoride channel Fluc/FEX (TC 1.A.43) family.

The protein resides in the cell inner membrane. The catalysed reaction is fluoride(in) = fluoride(out). Its activity is regulated as follows. Na(+) is not transported, but it plays an essential structural role and its presence is essential for fluoride channel function. Fluoride-specific ion channel. Important for reducing fluoride concentration in the cell, thus reducing its toxicity. This chain is Fluoride-specific ion channel FluC 1, found in Rhodopseudomonas palustris (strain BisB18).